We begin with the raw amino-acid sequence, 424 residues long: Gamma-glutamyl phosphate reductase (424 aa).

The protein belongs to the gamma-glutamyl phosphate reductase family.

The protein localises to the cytoplasm. The catalysed reaction is L-glutamate 5-semialdehyde + phosphate + NADP(+) = L-glutamyl 5-phosphate + NADPH + H(+). The protein operates within amino-acid biosynthesis; L-proline biosynthesis; L-glutamate 5-semialdehyde from L-glutamate: step 2/2. In terms of biological role, catalyzes the NADPH-dependent reduction of L-glutamate 5-phosphate into L-glutamate 5-semialdehyde and phosphate. The product spontaneously undergoes cyclization to form 1-pyrroline-5-carboxylate. This chain is Gamma-glutamyl phosphate reductase, found in Shewanella sediminis (strain HAW-EB3).